We begin with the raw amino-acid sequence, 130 residues long: Small ribosomal subunit protein uS9 (130 aa).

It belongs to the universal ribosomal protein uS9 family.

The polypeptide is Small ribosomal subunit protein uS9 (Methylococcus capsulatus (strain ATCC 33009 / NCIMB 11132 / Bath)).